Consider the following 730-residue polypeptide: Diacylglycerol kinase alpha (730 aa).

EF-hand domains follow at residues 111–146 (RPEDKLEFTFKLYDMDRNGILDSTEVEKIILQMMRV) and 156–191 (ELRPILQEMMREMDQDGSGSVSLDEWVRAGATTVPL). Residues Asp124, Asp126, Asn128, Glu135, Asp169, Asp171, Ser173, Ser175, and Glu180 each coordinate Ca(2+). 2 Phorbol-ester/DAG-type zinc fingers span residues 206–254 (NHIW…AQPC) and 270–320 (SHLW…GPEC). The 134-residue stretch at 368–501 (SNTHPLLVFI…LDRWFLEVIP (134 aa)) folds into the DAGKc domain. N6-acetyllysine is present on Lys479.

It belongs to the eukaryotic diacylglycerol kinase family. As to quaternary structure, monomer.

The protein localises to the cytoplasm. Its subcellular location is the cytosol. It catalyses the reaction a 1,2-diacyl-sn-glycerol + ATP = a 1,2-diacyl-sn-glycero-3-phosphate + ADP + H(+). The enzyme catalyses a 1-O-alkyl-sn-glycerol + ATP = a 1-O-alkyl-sn-glycero-3-phosphate + ADP + H(+). The catalysed reaction is 1-O-alkyl-2-acyl-sn-glycerol + ATP = 1-O-alkyl-2-acyl-sn-glycero-3-phosphate + ADP + H(+). It carries out the reaction 1,2-dihexadecanoyl-sn-glycerol + ATP = 1,2-dihexadecanoyl-sn-glycero-3-phosphate + ADP + H(+). It catalyses the reaction 1-hexadecanoyl-2-(9Z-octadecenoyl)-sn-glycerol + ATP = 1-hexadecanoyl-2-(9Z-octadecenoyl)-sn-glycero-3-phosphate + ADP + H(+). The enzyme catalyses 2-(9Z-octadecenoyl)-glycerol + ATP = 2-(9Z-octadecenoyl)-sn-glycero-3-phosphate + ADP + H(+). The catalysed reaction is 1,2-di-(9Z-octadecenoyl)-sn-glycerol + ATP = 1,2-di-(9Z-octadecenoyl)-sn-glycero-3-phosphate + ADP + H(+). It carries out the reaction 1-octadecanoyl-2-(5Z,8Z,11Z,14Z-eicosatetraenoyl)-sn-glycerol + ATP = 1-octadecanoyl-2-(5Z,8Z,11Z,14Z-eicosatetraenoyl)-sn-glycero-3-phosphate + ADP + H(+). It catalyses the reaction 1,2-didecanoyl-sn-glycerol + ATP = 1,2-didecanoyl-sn-glycero-3-phosphate + ADP + H(+). The enzyme catalyses 1-O-hexadecyl-2-acetyl-sn-glycerol + ATP = 1-O-hexadecyl-2-acetyl-sn-glycero-3-phosphate + ADP + H(+). The catalysed reaction is 1-O-hexadecyl-2-(5Z,8Z,11Z,14Z-eicosatetraenoyl)-sn-glycerol + ATP = 1-O-hexadecyl-2-(5Z,8Z,11Z,14Z-eicosatetraenoyl)-sn-glycero-3-phosphate + ADP + H(+). It carries out the reaction 1-O-hexadecyl-2-(9Z-octadecenoyl)-sn-glycerol + ATP = 1-O-hexadecyl-2-(9Z-octadecenoyl)-sn-glycero-3-phosphate + ADP + H(+). It catalyses the reaction 1-O-hexadecyl-sn-glycerol + ATP = 1-O-hexadecyl-sn-glycero-3-phosphate + ADP + H(+). The protein operates within lipid metabolism; glycerolipid metabolism. Stimulated by calcium and phosphatidylserine. Its function is as follows. Diacylglycerol kinase that converts diacylglycerol/DAG into phosphatidic acid/phosphatidate/PA and regulates the respective levels of these two bioactive lipids. Thereby, acts as a central switch between the signaling pathways activated by these second messengers with different cellular targets and opposite effects in numerous biological processes. Also plays an important role in the biosynthesis of complex lipids. Can also phosphorylate 1-alkyl-2-acylglycerol in vitro as efficiently as diacylglycerol provided it contains an arachidonoyl group. Also involved in the production of alkyl-lysophosphatidic acid, another bioactive lipid, through the phosphorylation of 1-alkyl-2-acetyl glycerol. The polypeptide is Diacylglycerol kinase alpha (Dgka) (Mus musculus (Mouse)).